The sequence spans 163 residues: MATASSFDVVSDFDQQELVNAVDQARREITNRYDLKDSATTLELTAETLTINTDSEFSLDAVVTLLQTKVAKRNLSLKIFDFGKVETASGNRVRQVITLQRGLSSELAKDLSKQIRDQFKKVQVSIQGDALRVSAKSKDDLQTVIQYLKQQDVPAPLQFTNYR.

The protein belongs to the YajQ family.

Nucleotide-binding protein. The sequence is that of Nucleotide-binding protein syc0675_c from Synechococcus sp. (strain ATCC 27144 / PCC 6301 / SAUG 1402/1) (Anacystis nidulans).